Reading from the N-terminus, the 93-residue chain is Small ribosomal subunit protein uS19 (93 aa).

It belongs to the universal ribosomal protein uS19 family.

In terms of biological role, protein S19 forms a complex with S13 that binds strongly to the 16S ribosomal RNA. The chain is Small ribosomal subunit protein uS19 from Frankia alni (strain DSM 45986 / CECT 9034 / ACN14a).